The sequence spans 400 residues: Zinc finger protein 514 (400 aa).

The region spanning 1–72 (MTFEDVAVEF…EREISTGAHS (72 aa)) is the KRAB domain. C2H2-type zinc fingers lie at residues 204–226 (CKCN…QRCH), 232–254 (YECS…QRTH), 260–282 (YECS…YRFH), 288–310 (YKCN…QRTH), 316–338 (YECR…YRFH), 344–366 (YKCN…YRFH), and 372–394 (YKCN…QRSH).

This sequence belongs to the krueppel C2H2-type zinc-finger protein family.

It is found in the nucleus. May be involved in transcriptional regulation. This is Zinc finger protein 514 (ZNF514) from Homo sapiens (Human).